A 278-amino-acid polypeptide reads, in one-letter code: Dermonecrotic toxin LbSicTox-betaIA1a (278 aa).

The active site involves histidine 12. Glutamate 32 and aspartate 34 together coordinate Mg(2+). Histidine 48 functions as the Nucleophile in the catalytic mechanism. 2 cysteine pairs are disulfide-bonded: cysteine 52/cysteine 58 and cysteine 54/cysteine 197. Aspartate 92 serves as a coordination point for Mg(2+). Residue asparagine 258 is glycosylated (N-linked (GlcNAc...) asparagine).

Belongs to the arthropod phospholipase D family. Class II subfamily. Class IIb sub-subfamily. Expressed by the venom gland.

It is found in the secreted. The catalysed reaction is an N-(acyl)-sphingosylphosphoethanolamine = an N-(acyl)-sphingosyl-1,3-cyclic phosphate + ethanolamine. It carries out the reaction a 1-acyl-sn-glycero-3-phosphocholine = a 1-acyl-sn-glycero-2,3-cyclic phosphate + choline. It catalyses the reaction a 1-acyl-sn-glycero-3-phosphoethanolamine = a 1-acyl-sn-glycero-2,3-cyclic phosphate + ethanolamine. Functionally, this toxin does not show activity on sphingomyelin (SM) and does not show dermonecrotic activities. This toxin is a member of dermonecrotic toxins that cleave the phosphodiester linkage between the phosphate and headgroup of certain phospholipids (sphingolipid and lysolipid substrates), forming an alcohol (often choline) and a cyclic phosphate. It may act on ceramide phosphoethanolamine (CPE), lysophosphatidylcholine (LPC) and lysophosphatidylethanolamine (LPE), but not on lysophosphatidylserine (LPS), and lysophosphatidylglycerol (LPG). It may act by transphosphatidylation, releasing exclusively cyclic phosphate products as second products. The protein is Dermonecrotic toxin LbSicTox-betaIA1a of Loxosceles boneti (North American fiddleback spider).